The chain runs to 295 residues: MATGIALVGPGAVGTTVAALLHKAGYSPLLCGHTPRAGIELRRDGADPIVVPGPVHTSPREVAGPVDVLILAVKATQNDAARPWLTRLCDERTVVAVLQNGVEQVEQVQPHCPSSAVVPAIVWCSAETQPQGWVRLRGEAALVVPTGPAAEQFAGLLRGAGATVDCDPDFTTAAWRKLLVNALAGFMVLSGRRSAMFRRDDVAALSRRYVAECLAVARAEGARLDDDVVDEVVRLVRSAPQDMGTSMLADRAAHRPLEWDLRNGVIVRKARAHGLATPISDVLVPLLAAASDGPG.

NADP(+) is bound by residues 9 to 14 (GPGAVG), N100, and A126. N100 serves as a coordination point for substrate. Residue K177 is the Proton donor of the active site. 2 residues coordinate substrate: N181 and S246. NADP(+) is bound at residue E258.

It belongs to the ketopantoate reductase family.

The protein resides in the cytoplasm. It catalyses the reaction (R)-pantoate + NADP(+) = 2-dehydropantoate + NADPH + H(+). It participates in cofactor biosynthesis; (R)-pantothenate biosynthesis; (R)-pantoate from 3-methyl-2-oxobutanoate: step 2/2. Functionally, catalyzes the NADPH-dependent reduction of ketopantoate into pantoic acid. The polypeptide is 2-dehydropantoate 2-reductase (Mycobacterium tuberculosis (strain CDC 1551 / Oshkosh)).